The sequence spans 88 residues: Small ribosomal subunit protein uS15c (88 aa).

Belongs to the universal ribosomal protein uS15 family. In terms of assembly, part of the 30S ribosomal subunit.

The protein resides in the plastid. It localises to the chloroplast. This chain is Small ribosomal subunit protein uS15c (rps15), found in Nasturtium officinale (Watercress).